An 83-amino-acid chain; its full sequence is Arminin 4364 (83 aa).

The N-terminal stretch at 1–18 (MKTVFAILFLAFIALTYA) is a signal peptide. Positions 19-55 (RSYEDVKEEIKNEVEKEILEDLEKETDELNERKINDA) are excised as a propeptide. V80 is modified (valine amide).

This sequence belongs to the arminin family. In terms of tissue distribution, expressed in entodermal epithelium along the body column.

It is found in the secreted. The protein localises to the target cell membrane. In terms of biological role, antimicrobial peptide with a broad-spectrum antimicrobial activity. Keeps its antibacterial activity under a wide range of salt concentrations that mimic physiological conditions of human blood, which is surprising, since Hydra is an obligate freshwater animal with nearly no salt tolerance. Does not affect red blood cells. The protein is Arminin 4364 of Hydra vulgaris (Hydra).